The following is a 359-amino-acid chain: Type-1 angiotensin II receptor (359 aa).

Topologically, residues 1–25 (MILNSSTEDGIKRIQDDCPKAGRHN) are extracellular. An N-linked (GlcNAc...) asparagine glycan is attached at Asn4. Angiotensin II is bound by residues Gln15 and Asp17. Disulfide bonds link Cys18–Cys274 and Cys101–Cys180. A helical membrane pass occupies residues 26–55 (YIFVMIPTLYSIIFVVGIFGNSLVVIVIYF). Over 56–61 (YMKLKT) the chain is Cytoplasmic. Residues 62–89 (VASVFLLNLALADLCFLLTLPLWAVYTA) traverse the membrane as a helical segment. Over 90-98 (MEYRWPFGN) the chain is Extracellular. A helical membrane pass occupies residues 99–125 (YLCKIASASVSFNLYASVFLLTCLSID). At 126–141 (RYLAIVHPMKSRLRRT) the chain is on the cytoplasmic side. The chain crosses the membrane as a helical span at residues 142 to 165 (MLVAKVTCIIIWLLAGLASLPAII). The Extracellular portion of the chain corresponds to 166–190 (HRNVFFIENTNITVCAFHYESQNST). Arg167 lines the angiotensin II pocket. An N-linked (GlcNAc...) asparagine glycan is attached at Asn176. Phe182, His183, and Tyr184 together coordinate angiotensin II. Asn188 carries N-linked (GlcNAc...) asparagine glycosylation. Residues 191 to 216 (LPIGLGLTKNILGFLFPFLIILTSYT) form a helical membrane-spanning segment. Position 199 (Lys199) interacts with angiotensin II. Residues 217 to 239 (LIWKALKKAYEIQKNKPRNDDIF) lie on the Cytoplasmic side of the membrane. A helical membrane pass occupies residues 240-268 (KIIMAIVLFFFFSWIPHQIFTFLDVLIQL). Residues 269–278 (GIIRDCRIAD) lie on the Extracellular side of the membrane. The chain crosses the membrane as a helical span at residues 279-304 (IVDTAMPITICIAYFNNCLNPLFYGF). Residues 305-359 (LGKKFKKYFLQLLKYIPPKAKSHSNLSTKMSTLSYRPSDNVSSSTKKPAPCFEVE) are Cytoplasmic-facing. A compositionally biased stretch (polar residues) spans 335–350 (STLSYRPSDNVSSSTK). Positions 335–359 (STLSYRPSDNVSSSTKKPAPCFEVE) are disordered. Cys355 carries S-palmitoyl cysteine lipidation.

This sequence belongs to the G-protein coupled receptor 1 family. Interacts with MAS1. Interacts with ARRB1. Interacts with FLNA (via filamin repeat 21); increases PKA-mediated phosphorylation of FLNA. In terms of processing, C-terminal Ser or Thr residues may be phosphorylated.

It localises to the cell membrane. Receptor for angiotensin II, a vasoconstricting peptide, which acts as a key regulator of blood pressure and sodium retention by the kidney. The activated receptor in turn couples to G-alpha proteins G(q) (GNAQ, GNA11, GNA14 or GNA15) and thus activates phospholipase C and increases the cytosolic Ca(2+) concentrations, which in turn triggers cellular responses such as stimulation of protein kinase C. The protein is Type-1 angiotensin II receptor (AGTR1) of Pan troglodytes (Chimpanzee).